A 638-amino-acid chain; its full sequence is tRNA uridine 5-carboxymethylaminomethyl modification enzyme MnmG (638 aa).

FAD-binding positions include Gly-15–Gly-20, Ile-127, and Ser-182. Gly-276–Phe-290 contacts NAD(+). Gln-373 contacts FAD.

The protein belongs to the MnmG family. As to quaternary structure, homodimer. Heterotetramer of two MnmE and two MnmG subunits. The cofactor is FAD.

Its subcellular location is the cytoplasm. Its function is as follows. NAD-binding protein involved in the addition of a carboxymethylaminomethyl (cmnm) group at the wobble position (U34) of certain tRNAs, forming tRNA-cmnm(5)s(2)U34. The sequence is that of tRNA uridine 5-carboxymethylaminomethyl modification enzyme MnmG from Streptococcus suis (strain 98HAH33).